An 878-amino-acid polypeptide reads, in one-letter code: MNQQYSAMRSNVSMLGKLLGDTIKEALGEDILDKVETIRKLSKSSRAGNEAHRQQLLSTLQNLSNNELLPVARAFNQFLNLTNVAEQYHSISPHGEAASNPVALAKLFTRLKEKNFNNGDLKKAVNELSIELVLTAHPTEIARRTLIHKLVAVNTCLSQLDHDDLADYERNNIMRRLRQLVAQSWHTDEIRKIRPTPIDEAKWGFAMVENSLWEGVPAFLREFNEQLEESIDYSLPVEAVPVRFTSWMGGDRDGNPNVTAEVTRHVLLLSRWKAADLFLKDIQVLVSELSMSECTPEVRKLAGGDEILEPYREIAKKLRTQLSNTLTYLEKQLKGEQVLPPTDLLVDNEQLWQPLYACYQSLKTCGMEIIANGQLLDILRRIRCFGLSLVRIDVRQESTRHTTAISELTQYLELGDYASWSEEEKQAFLLYELHSKRPLIPHNWQPSAETQEVFATCKVIAESPQDAIAAYVISMAKAPSDVLAVHLLLKEAGCPFTLPVAPLFETLDDLNNAENIIQQLMNIQWYRELIHDKQMVMIGYSDSAKDAGVMAAAWAQYRAQDALINVCEKEGITLTLFHGRGGTIGRGGAPAHAALLSQPPGSLKGGLRVTEQGEMIRFKFGLPQVTISSLALYASAILEANLLPPPEPKPEWHQVMDTLSDVSCKMYRDYVREQPDFVPYFRAATPEQELAKLPLGSRPAKRHPAGGVESLRAIPWIFAWTQNRLMLPAWLGAGAALQQVVNDGKQDVLAEMCRDWPFFTTRIGMLEMVFAKADLWLAEYYDHRLVDKNLWPLGQKLRKQLSADIKTVLAISKDEHLMADLPWIAESIALRNVYTDPLNVLQVELLLRSRQQQYSDPQVEQALMVTIAGIAAGMRNTG.

Catalysis depends on residues His-137 and Lys-545.

The protein belongs to the PEPCase type 1 family. Mg(2+) is required as a cofactor.

The enzyme catalyses oxaloacetate + phosphate = phosphoenolpyruvate + hydrogencarbonate. Its function is as follows. Forms oxaloacetate, a four-carbon dicarboxylic acid source for the tricarboxylic acid cycle. This Photorhabdus laumondii subsp. laumondii (strain DSM 15139 / CIP 105565 / TT01) (Photorhabdus luminescens subsp. laumondii) protein is Phosphoenolpyruvate carboxylase.